Consider the following 206-residue polypeptide: Large ribosomal subunit protein uL4 (206 aa).

It belongs to the universal ribosomal protein uL4 family. As to quaternary structure, part of the 50S ribosomal subunit.

Its function is as follows. One of the primary rRNA binding proteins, this protein initially binds near the 5'-end of the 23S rRNA. It is important during the early stages of 50S assembly. It makes multiple contacts with different domains of the 23S rRNA in the assembled 50S subunit and ribosome. Forms part of the polypeptide exit tunnel. The chain is Large ribosomal subunit protein uL4 from Nitratidesulfovibrio vulgaris (strain ATCC 29579 / DSM 644 / CCUG 34227 / NCIMB 8303 / VKM B-1760 / Hildenborough) (Desulfovibrio vulgaris).